The chain runs to 177 residues: Large ribosomal subunit protein uL6 (177 aa).

This sequence belongs to the universal ribosomal protein uL6 family. As to quaternary structure, part of the 50S ribosomal subunit.

This protein binds to the 23S rRNA, and is important in its secondary structure. It is located near the subunit interface in the base of the L7/L12 stalk, and near the tRNA binding site of the peptidyltransferase center. This Methylorubrum extorquens (strain CM4 / NCIMB 13688) (Methylobacterium extorquens) protein is Large ribosomal subunit protein uL6.